We begin with the raw amino-acid sequence, 333 residues long: Glyceraldehyde-3-phosphate dehydrogenase (333 aa).

Residues 12–13, Asp-36, Arg-80, and Ser-120 contribute to the NAD(+) site; that span reads RI. Residues 150–152, Thr-181, Arg-196, 209–210, and Arg-232 each bind D-glyceraldehyde 3-phosphate; these read SCT and TG. Cys-151 (nucleophile) is an active-site residue. NAD(+) is bound at residue Asn-314.

It belongs to the glyceraldehyde-3-phosphate dehydrogenase family. In terms of assembly, homotetramer.

The protein localises to the cytoplasm. It catalyses the reaction D-glyceraldehyde 3-phosphate + phosphate + NAD(+) = (2R)-3-phospho-glyceroyl phosphate + NADH + H(+). Its pathway is carbohydrate degradation; glycolysis; pyruvate from D-glyceraldehyde 3-phosphate: step 1/5. Its function is as follows. Catalyzes the oxidative phosphorylation of glyceraldehyde 3-phosphate (G3P) to 1,3-bisphosphoglycerate (BPG) using the cofactor NAD. The first reaction step involves the formation of a hemiacetal intermediate between G3P and a cysteine residue, and this hemiacetal intermediate is then oxidized to a thioester, with concomitant reduction of NAD to NADH. The reduced NADH is then exchanged with the second NAD, and the thioester is attacked by a nucleophilic inorganic phosphate to produce BPG. The chain is Glyceraldehyde-3-phosphate dehydrogenase (gapB) from Cereibacter sphaeroides (Rhodobacter sphaeroides).